The chain runs to 330 residues: 4-hydroxythreonine-4-phosphate dehydrogenase (330 aa).

Residues H136 and T137 each contribute to the substrate site. Positions 166, 211, and 266 each coordinate a divalent metal cation. Residues K274, N283, and R292 each coordinate substrate.

Belongs to the PdxA family. As to quaternary structure, homodimer. Zn(2+) is required as a cofactor. It depends on Mg(2+) as a cofactor. The cofactor is Co(2+).

The protein resides in the cytoplasm. It catalyses the reaction 4-(phosphooxy)-L-threonine + NAD(+) = 3-amino-2-oxopropyl phosphate + CO2 + NADH. Its pathway is cofactor biosynthesis; pyridoxine 5'-phosphate biosynthesis; pyridoxine 5'-phosphate from D-erythrose 4-phosphate: step 4/5. Its function is as follows. Catalyzes the NAD(P)-dependent oxidation of 4-(phosphooxy)-L-threonine (HTP) into 2-amino-3-oxo-4-(phosphooxy)butyric acid which spontaneously decarboxylates to form 3-amino-2-oxopropyl phosphate (AHAP). The polypeptide is 4-hydroxythreonine-4-phosphate dehydrogenase (Serratia proteamaculans (strain 568)).